A 295-amino-acid polypeptide reads, in one-letter code: uncharacterized protein (295 aa).

The HTH araC/xylS-type domain occupies 8 to 106 (QKTINWIESH…HMPPGAYRTF (99 aa)). The H-T-H motif DNA-binding region spans 25 to 46 (EDIVNVSSFSKFHFHRIFQKEV).

Functionally, probable transcriptional regulator. This is an uncharacterized protein from Bacillus subtilis (strain 168).